Reading from the N-terminus, the 124-residue chain is UPF0231 protein Shewmr7_3366 (124 aa).

The protein belongs to the UPF0231 family.

This chain is UPF0231 protein Shewmr7_3366, found in Shewanella sp. (strain MR-7).